A 381-amino-acid chain; its full sequence is tRNA (guanine(6)-N2)-methyltransferase (381 aa).

The 115-residue stretch at Lys-43–Thr-157 folds into the THUMP domain. S-adenosyl-L-methionine is bound by residues His-173–Leu-177, Ser-204–Thr-206, Asp-261, Asp-289–Ala-290, and Asn-306.

Belongs to the methyltransferase superfamily.

Its subcellular location is the cytoplasm. It catalyses the reaction guanosine(6) in tRNA + S-adenosyl-L-methionine = N(2)-methylguanosine(6) in tRNA + S-adenosyl-L-homocysteine + H(+). Its function is as follows. S-adenosyl-L-methionine-dependent methyltransferase that catalyzes the methylation of the guanosine nucleotide at position 6 (m2G6) in tRNA(Cys). In Methanocaldococcus jannaschii (strain ATCC 43067 / DSM 2661 / JAL-1 / JCM 10045 / NBRC 100440) (Methanococcus jannaschii), this protein is tRNA (guanine(6)-N2)-methyltransferase.